The following is a 307-amino-acid chain: Ornithine carbamoyltransferase (307 aa).

Carbamoyl phosphate is bound by residues 56–59 (STRT), Gln83, Arg107, and 134–137 (HPCQ). L-ornithine-binding positions include Asn165, Asp223, and 227–228 (SM). Carbamoyl phosphate contacts are provided by residues 263-264 (CL) and Arg291.

Belongs to the aspartate/ornithine carbamoyltransferase superfamily. OTCase family.

The protein localises to the cytoplasm. It carries out the reaction carbamoyl phosphate + L-ornithine = L-citrulline + phosphate + H(+). It participates in amino-acid biosynthesis; L-arginine biosynthesis; L-arginine from L-ornithine and carbamoyl phosphate: step 1/3. In terms of biological role, reversibly catalyzes the transfer of the carbamoyl group from carbamoyl phosphate (CP) to the N(epsilon) atom of ornithine (ORN) to produce L-citrulline. The polypeptide is Ornithine carbamoyltransferase (Cupriavidus pinatubonensis (strain JMP 134 / LMG 1197) (Cupriavidus necator (strain JMP 134))).